A 269-amino-acid polypeptide reads, in one-letter code: Oligoribonuclease, mitochondrial (269 aa).

One can recognise an Exonuclease domain in the interval 55–227 (LVWIDCEMTG…SDIKESIAQL (173 aa)). The active site involves tyrosine 184. A disordered region spans residues 240-269 (ETESVESIGSEQPESPSSSTSSLKRQRTDF). The segment covering 245–261 (ESIGSEQPESPSSSTSS) has biased composition (low complexity).

Belongs to the oligoribonuclease family.

It is found in the mitochondrion. 3'-to-5' exoribonuclease specific for small oligoribonucleotides. The sequence is that of Oligoribonuclease, mitochondrial (REX2) from Saccharomyces cerevisiae (strain ATCC 204508 / S288c) (Baker's yeast).